The sequence spans 207 residues: Ribonuclease HII (207 aa).

An RNase H type-2 domain is found at 12-201; it reads ALVAGVDEVG…VRELLDVVSI (190 aa). 3 residues coordinate a divalent metal cation: aspartate 18, glutamate 19, and aspartate 110.

The protein belongs to the RNase HII family. Requires Mn(2+) as cofactor. It depends on Mg(2+) as a cofactor.

It is found in the cytoplasm. It carries out the reaction Endonucleolytic cleavage to 5'-phosphomonoester.. Its function is as follows. Endonuclease that specifically degrades the RNA of RNA-DNA hybrids. This chain is Ribonuclease HII, found in Azotobacter vinelandii (strain DJ / ATCC BAA-1303).